Consider the following 115-residue polypeptide: Large ribosomal subunit protein bL20 (115 aa).

This sequence belongs to the bacterial ribosomal protein bL20 family.

Binds directly to 23S ribosomal RNA and is necessary for the in vitro assembly process of the 50S ribosomal subunit. It is not involved in the protein synthesizing functions of that subunit. The protein is Large ribosomal subunit protein bL20 of Borrelia turicatae (strain 91E135).